Reading from the N-terminus, the 276-residue chain is Protein G1 (276 aa).

2 disordered regions span residues 1–30 (MSSSSAAALGSDDGCSPAELRPSRYESQKR) and 178–213 (SYHKKKKRRGGNMNGARGGGGGGARAGVNDGDATAP). Positions 21–30 (RPSRYESQKR) are enriched in basic and acidic residues. The region spanning 24-183 (RYESQKRRDW…ARGISYHKKK (160 aa)) is the ALOG domain. Basic residues predominate over residues 178–187 (SYHKKKKRRG). Residues 181–185 (KKKKR) carry the Nuclear localization signal motif. The segment covering 189 to 202 (NMNGARGGGGGGAR) has biased composition (gly residues). The segment covering 203–213 (AGVNDGDATAP) has biased composition (low complexity).

The protein belongs to the plant homeotic and developmental regulators ALOG protein family. As to expression, expressed at the empty glumes of immature spikelets, which are lemmas of the sterile florets located at the lateral side of the spikelet, throughout their development.

The protein localises to the nucleus. In terms of biological role, probable transcription regulator that acts as a developmental regulator by promoting cell growth in response to light. Transcription regulator that restrains empty glumes growth, lemmas of the sterile florets located at the lateral side of the rice spikelet, to maintain their small size, probably by repressing lemma identity via transcription regulation. The polypeptide is Protein G1 (G1) (Oryza sativa subsp. japonica (Rice)).